Here is a 249-residue protein sequence, read N- to C-terminus: Hydroxyacylglutathione hydrolase (249 aa).

Residues H54, H56, D58, H59, H113, D138, and H176 each coordinate Zn(2+).

This sequence belongs to the metallo-beta-lactamase superfamily. Glyoxalase II family. In terms of assembly, monomer. The cofactor is Zn(2+).

It catalyses the reaction an S-(2-hydroxyacyl)glutathione + H2O = a 2-hydroxy carboxylate + glutathione + H(+). It participates in secondary metabolite metabolism; methylglyoxal degradation; (R)-lactate from methylglyoxal: step 2/2. Its function is as follows. Thiolesterase that catalyzes the hydrolysis of S-D-lactoyl-glutathione to form glutathione and D-lactic acid. The polypeptide is Hydroxyacylglutathione hydrolase (Synechococcus sp. (strain CC9605)).